We begin with the raw amino-acid sequence, 372 residues long: Forkhead box protein F1-B (372 aa).

The segment at 1-51 (MTAEIQQPPSQPPAQSSPMSAATDKHGGQPSAMESASCATKTKKTNAGIRR) is disordered. Residues 13-22 (PAQSSPMSAA) are compositionally biased toward low complexity. The segment at residues 54–148 (KPPYSYIALI…EEGSFRRRPR (95 aa)) is a DNA-binding region (fork-head).

In terms of tissue distribution, at the late gastrula stage, expressed in the presumptive ventrolateral mesoderm. During neurulation and tailbud stages, expressed in the lateral plate mesoderm and in the neural crest-derived structures of the head and branchial arches. During tailbud stages, expressed in the pronephros and pronephros ducts and in cells that migrate from the dorsolateral plate to the ventral region of the embryo (with the notable exception of the heart). These cells may represent hematopoietic or endothelial progenitor cells.

The protein localises to the nucleus. In terms of biological role, probable transcription factor. Required for smooth muscle (visceral mesoderm) differentiation during gut development. Also required for normal proliferation of the lateral plate mesoderm. Acts as a downstream mediator of bmp4-signaling. The chain is Forkhead box protein F1-B (foxf1-b) from Xenopus laevis (African clawed frog).